The chain runs to 100 residues: Trp operon repressor homolog (100 aa).

A DNA-binding region spans residues 59-82 (QRQISQMLGVGIATITRGSNELKS). Basic and acidic residues predominate over residues 78–93 (NELKSKSDTDKDKLKT). The interval 78–100 (NELKSKSDTDKDKLKTLLEQGAQ) is disordered.

This sequence belongs to the TrpR family. In terms of assembly, homodimer.

The protein resides in the cytoplasm. Functionally, this protein is an aporepressor. When complexed with L-tryptophan it binds the operator region of the trp operon and prevents the initiation of transcription. The polypeptide is Trp operon repressor homolog (Vibrio campbellii (strain ATCC BAA-1116)).